Here is a 492-residue protein sequence, read N- to C-terminus: ERAD-associated E3 ubiquitin-protein ligase HRD1A (492 aa).

Over 1 to 3 the chain is Cytoplasmic; the sequence is MIR. The helical transmembrane segment at 4-24 threads the bilayer; the sequence is LRTYAGLSFMATLAVIYHAFS. At 25–40 the chain is on the lumenal side; it reads SRGQFYPATVYLSTSK. Residues 41–61 traverse the membrane as a helical segment; that stretch reads ISLVLLLNMCLVLMLSLWHLV. At 62-98 the chain is on the cytoplasmic side; that stretch reads KFVFLGSLREAEVERLNEQAWRELMEILFAITIFRQD. A helical transmembrane segment spans residues 99 to 119; the sequence is FSSGFLPLVVTLLLIKALHWL. Residues 120–135 lie on the Lumenal side of the membrane; that stretch reads AQKRVEYIETTPSVSK. A helical transmembrane segment spans residues 136 to 156; the sequence is LSHFRIVSFMGFLLLVDSLFM. Over 157 to 170 the chain is Cytoplasmic; it reads YSSIRHLIQSRQAS. The chain crosses the membrane as a helical span at residues 171 to 191; that stretch reads VSLFFSFEYMILATTTVAIFV. The Lumenal portion of the chain corresponds to 192 to 221; the sequence is KYVFYVTDMLMDGQWEKKPVYTFYLELIRD. The helical transmembrane segment at 222 to 242 threads the bilayer; sequence LLHLSMYICFFFVIFMNYGVP. Over 243 to 492 the chain is Cytoplasmic; sequence LHLLRELYET…KGKSVADAAE (250 aa). Residues 292-330 form an RING-type; atypical zinc finger; the sequence is CIICREEMTNAKKLICGHLFHVHCLRSWLERQQTCPTCR. Disordered stretches follow at residues 339–379 and 470–492; these read ATSA…NSLS and ETRK…DAAE. Residues 351-378 are compositionally biased toward low complexity; sequence QGSQQGTSSSGNQGSEISSSAGVSNNSL. A compositionally biased stretch (basic and acidic residues) spans 470 to 486; that stretch reads ETRKPESAGEPENKGKS.

It belongs to the HRD1 family.

It is found in the endoplasmic reticulum membrane. The enzyme catalyses S-ubiquitinyl-[E2 ubiquitin-conjugating enzyme]-L-cysteine + [acceptor protein]-L-lysine = [E2 ubiquitin-conjugating enzyme]-L-cysteine + N(6)-ubiquitinyl-[acceptor protein]-L-lysine.. It functions in the pathway protein modification; protein ubiquitination. In terms of biological role, probable component of the HRD1 ubiquitin ligase complex that mediates the rapid degradation of misfolded endoplasmic reticulum (ER) proteins, a process called ER-associated degradation (ERAD). Targets the misfolded LRR receptor kinase BRI1. Functions redundantly with HRD3B. The sequence is that of ERAD-associated E3 ubiquitin-protein ligase HRD1A from Arabidopsis thaliana (Mouse-ear cress).